A 153-amino-acid chain; its full sequence is Endoribonuclease YbeY (153 aa).

Positions 113, 117, and 123 each coordinate Zn(2+).

The protein belongs to the endoribonuclease YbeY family. It depends on Zn(2+) as a cofactor.

It localises to the cytoplasm. Single strand-specific metallo-endoribonuclease involved in late-stage 70S ribosome quality control and in maturation of the 3' terminus of the 16S rRNA. This Aliivibrio fischeri (strain ATCC 700601 / ES114) (Vibrio fischeri) protein is Endoribonuclease YbeY.